Here is a 319-residue protein sequence, read N- to C-terminus: Protease HtpX homolog (319 aa).

Helical transmembrane passes span 6–26 and 28–48; these read TAML…VIGG and GGMM…YWNS. H130 is a Zn(2+) binding site. E131 is an active-site residue. H134 is a Zn(2+) binding site. 2 consecutive transmembrane segments (helical) span residues 145–165 and 172–192; these read MTAT…FFGG and PLGF…AALV. E201 is a Zn(2+) binding site. The disordered stretch occupies residues 280 to 319; that stretch reads EMSTGSTAPVRPDNAVRKSRSVPRTGWGRGGSEPPKGPWS.

It belongs to the peptidase M48B family. It depends on Zn(2+) as a cofactor.

The protein localises to the cell inner membrane. The sequence is that of Protease HtpX homolog from Sinorhizobium medicae (strain WSM419) (Ensifer medicae).